We begin with the raw amino-acid sequence, 305 residues long: MYNGILPVYKERGLTSHDVVFKLRKILKTKKIGHTGTLDPEVAGVLPVCIGNATRVSDYVMDMGKAYEANVSIGRSTTTEDQTGDTLEMKGVHSADFNNDDIDRLLENFKGVIEQIPPMYSSVKVNGKKLYEYARNNETVERPKRKVNIKDIGRISELDFKENECHFKIRVICGKGTYIRTLATDIGVKLGFPAHMSKLTRIESGGFVLKDSLTLEQIKELHEQDSLQNKLFPLEYGLKGLPSIKIKDSHIKKRILNGQKFNKNEFDNKIKDQIVFIDDDSEKVLAIYMVHPTKESEIKPKKVFN.

D39 functions as the Nucleophile in the catalytic mechanism.

The protein belongs to the pseudouridine synthase TruB family. Type 1 subfamily.

The enzyme catalyses uridine(55) in tRNA = pseudouridine(55) in tRNA. In terms of biological role, responsible for synthesis of pseudouridine from uracil-55 in the psi GC loop of transfer RNAs. This chain is tRNA pseudouridine synthase B, found in Staphylococcus aureus (strain bovine RF122 / ET3-1).